Reading from the N-terminus, the 495-residue chain is Histidine--tRNA ligase (495 aa).

Over residues 1–10 (MTTDSEQPNT) the composition is skewed to polar residues. Positions 1–24 (MTTDSEQPNTDFRPEARAPRGFAD) are disordered. A compositionally biased stretch (basic and acidic residues) spans 12 to 24 (FRPEARAPRGFAD).

Belongs to the class-II aminoacyl-tRNA synthetase family. Homodimer.

The protein resides in the cytoplasm. The enzyme catalyses tRNA(His) + L-histidine + ATP = L-histidyl-tRNA(His) + AMP + diphosphate + H(+). The sequence is that of Histidine--tRNA ligase (hisS) from Caulobacter vibrioides (strain ATCC 19089 / CIP 103742 / CB 15) (Caulobacter crescentus).